Reading from the N-terminus, the 1217-residue chain is ATP-dependent RNA helicase DHX30 (1217 aa).

Aspartate 15 and serine 29 each carry phosphoserine. Residues 76–144 enclose the DRBM domain; sequence PKNLLNSVIG…QAAAAACQLF (69 aa). Residues 176-223 form a disordered region; that stretch reads WWRPEPTMPPTSWRQLNPENIRPGGPAGLSRSLGREEEEDEEEELEEG. Positions 211–223 are enriched in acidic residues; the sequence is EEEEDEEEELEEG. A phosphoserine mark is found at serine 249 and serine 403. The 169-residue stretch at 467–635 folds into the Helicase ATP-binding domain; sequence LSAIEQHPVV…FGGCPVIKVP (169 aa). 480–487 lines the ATP pocket; it reads GDTGCGKT. The short motif at 582-585 is the DEAH box element; that stretch reads DEVH. One can recognise a Helicase C-terminal domain in the interval 677-850; it reads LVTDLVLHID…NLVLQAKIHM (174 aa).

This sequence belongs to the DEAD box helicase family. DEAH subfamily. As to quaternary structure, identified in a complex with TFAM and SSBP1. Interacts (via N-terminus) with ZC3HAV1 (via N-terminal domain) in an RNA-independent manner. Found in a complex with GRSF1, DDX28, FASTKD2 and FASTKD5. In terms of processing, phosphorylated on Ser-15. As to expression, expressed in the heart, brain, spleen, lung, liver, skeletal muscle, kidney, and testis. Expression is strongest in the testis and brain, while the lowest levels of expression are found in the spleen and lung.

It localises to the cytoplasm. The protein localises to the mitochondrion. It is found in the mitochondrion matrix. The protein resides in the mitochondrion nucleoid. The catalysed reaction is ATP + H2O = ADP + phosphate + H(+). In terms of biological role, RNA-dependent helicase. Plays an important role in the assembly of the mitochondrial large ribosomal subunit. Required for optimal function of the zinc-finger antiviral protein ZC3HAV1. Associates with mitochondrial DNA. Involved in nervous system development and differentiation through its involvement in the up-regulation of a number of genes which are required for neurogenesis, including GSC, NCAM1, neurogenin, and NEUROD. In Mus musculus (Mouse), this protein is ATP-dependent RNA helicase DHX30 (Dhx30).